The primary structure comprises 85 residues: U1-ctenitoxin-Pn1a (85 aa).

The first 16 residues, 1 to 16 (MKVAIVFLSLLVLAFA), serve as a signal peptide directing secretion. A propeptide spanning residues 17-34 (SESIEENREEFPVEESAR) is cleaved from the precursor. Cystine bridges form between C35–C49, C42–C55, C46–C81, C48–C65, and C57–C63. Positions 82–85 (QNKI) are excised as a propeptide.

It belongs to the neurotoxin 03 (Tx2) family. 05 subfamily. Expressed by the venom gland.

The protein resides in the secreted. In terms of biological role, insecticidal neurotoxin that reversibly inhibits the N-methyl-D-aspartate (NMDA)-subtype of ionotropic glutamate receptor (GRIN) and inhibits inactivation of insect sodium channels (Nav). In vivo, is highly toxic to insects. This chain is U1-ctenitoxin-Pn1a, found in Phoneutria nigriventer (Brazilian armed spider).